The primary structure comprises 338 residues: Ketol-acid reductoisomerase (NADP(+)) (338 aa).

A KARI N-terminal Rossmann domain is found at 1-181; that stretch reads MKVFYDKDCD…GGGRTGIIET (181 aa). Residues 24–27, arginine 47, serine 50, threonine 52, and 82–85 contribute to the NADP(+) site; these read YGSQ and DEFQ. Histidine 107 is a catalytic residue. Position 133 (glycine 133) interacts with NADP(+). One can recognise a KARI C-terminal knotted domain in the interval 182-327; the sequence is TFKDETETDL…EQLRSMMPWI (146 aa). Residues aspartate 190, glutamate 194, glutamate 226, and glutamate 230 each contribute to the Mg(2+) site. Residue serine 251 coordinates substrate.

The protein belongs to the ketol-acid reductoisomerase family. The cofactor is Mg(2+).

It catalyses the reaction (2R)-2,3-dihydroxy-3-methylbutanoate + NADP(+) = (2S)-2-acetolactate + NADPH + H(+). The enzyme catalyses (2R,3R)-2,3-dihydroxy-3-methylpentanoate + NADP(+) = (S)-2-ethyl-2-hydroxy-3-oxobutanoate + NADPH + H(+). The protein operates within amino-acid biosynthesis; L-isoleucine biosynthesis; L-isoleucine from 2-oxobutanoate: step 2/4. Its pathway is amino-acid biosynthesis; L-valine biosynthesis; L-valine from pyruvate: step 2/4. Functionally, involved in the biosynthesis of branched-chain amino acids (BCAA). Catalyzes an alkyl-migration followed by a ketol-acid reduction of (S)-2-acetolactate (S2AL) to yield (R)-2,3-dihydroxy-isovalerate. In the isomerase reaction, S2AL is rearranged via a Mg-dependent methyl migration to produce 3-hydroxy-3-methyl-2-ketobutyrate (HMKB). In the reductase reaction, this 2-ketoacid undergoes a metal-dependent reduction by NADPH to yield (R)-2,3-dihydroxy-isovalerate. The chain is Ketol-acid reductoisomerase (NADP(+)) from Pseudomonas putida (strain ATCC 700007 / DSM 6899 / JCM 31910 / BCRC 17059 / LMG 24140 / F1).